The sequence spans 344 residues: Ribosomal RNA large subunit methyltransferase Cfr (344 aa).

Catalysis depends on E90, which acts as the Proton acceptor. The Radical SAM core domain occupies 97 to 330 (KQGWESFCIS…ATVRTQFGSE (234 aa)). C104 and C335 are disulfide-bonded. C111, C115, and C118 together coordinate [4Fe-4S] cluster. S-adenosyl-L-methionine-binding positions include 157-158 (GE), S188, 211-213 (SLH), and N292. C335 acts as the S-methylcysteine intermediate in catalysis.

The protein belongs to the radical SAM superfamily. RlmN family. Cfr subfamily. [4Fe-4S] cluster is required as a cofactor.

It is found in the cytoplasm. It carries out the reaction adenosine(2503) in 23S rRNA + 2 reduced [2Fe-2S]-[ferredoxin] + 2 S-adenosyl-L-methionine = 8-methyladenosine(2503) in 23S rRNA + 5'-deoxyadenosine + L-methionine + 2 oxidized [2Fe-2S]-[ferredoxin] + S-adenosyl-L-homocysteine. Its function is as follows. Specifically methylates position 8 of adenine 2503 in 23S rRNA. Confers resistance to some classes of antibiotics. This Clostridium botulinum (strain Loch Maree / Type A3) protein is Ribosomal RNA large subunit methyltransferase Cfr.